The following is a 386-amino-acid chain: DNA replication and repair protein RecF (386 aa).

30 to 37 (GANAQGKT) contributes to the ATP binding site.

Belongs to the RecF family.

It is found in the cytoplasm. Its function is as follows. The RecF protein is involved in DNA metabolism; it is required for DNA replication and normal SOS inducibility. RecF binds preferentially to single-stranded, linear DNA. It also seems to bind ATP. This chain is DNA replication and repair protein RecF, found in Natranaerobius thermophilus (strain ATCC BAA-1301 / DSM 18059 / JW/NM-WN-LF).